A 225-amino-acid chain; its full sequence is 7-carboxy-7-deazaguanine synthase (225 aa).

Residues 12-14 and Arg27 contribute to the substrate site; that span reads IQG. Residues 18–225 enclose the Radical SAM core domain; the sequence is YIGVRQLFVR…PQVHKYLGVR (208 aa). Residues Cys31, Cys35, and Cys38 each contribute to the [4Fe-4S] cluster site. Thr40 is a binding site for Mg(2+). Residue Thr80 participates in substrate binding. Gly82 is an S-adenosyl-L-methionine binding site.

It belongs to the radical SAM superfamily. 7-carboxy-7-deazaguanine synthase family. Homodimer. [4Fe-4S] cluster is required as a cofactor. It depends on S-adenosyl-L-methionine as a cofactor. The cofactor is Mg(2+).

The enzyme catalyses 6-carboxy-5,6,7,8-tetrahydropterin + H(+) = 7-carboxy-7-deazaguanine + NH4(+). Its pathway is purine metabolism; 7-cyano-7-deazaguanine biosynthesis. In terms of biological role, catalyzes the complex heterocyclic radical-mediated conversion of 6-carboxy-5,6,7,8-tetrahydropterin (CPH4) to 7-carboxy-7-deazaguanine (CDG), a step common to the biosynthetic pathways of all 7-deazapurine-containing compounds. The chain is 7-carboxy-7-deazaguanine synthase from Archaeoglobus fulgidus (strain ATCC 49558 / DSM 4304 / JCM 9628 / NBRC 100126 / VC-16).